Consider the following 200-residue polypeptide: Pre-mRNA cleavage factor Im 25 kDa subunit 2 (200 aa).

A Nudix hydrolase domain is found at 45–172; it reads GMRTSVEGIL…KLLAVPLFEL (128 aa). An interaction with RNA region spans residues 72–74; that stretch reads TFC. Residues 79–100 carry the Nudix box motif; that stretch reads GRLKPGENEADGLKRKLTSKLG.

Belongs to the Nudix hydrolase family. CPSF5 subfamily. Homodimer. Component of the cleavage factor Im (CFIm) complex. Forms a complex with cleavage and polyadenylation specificity factor (CPSF) subunits FIPS5, PAPS4 and CPSF30.

The protein resides in the nucleus. Component of the cleavage factor Im (CFIm) complex that plays a key role in pre-mRNA 3'-processing. Involved in association with CPSF6 or CPSF7 in pre-MRNA 3'-end poly(A) site cleavage and poly(A) addition. NUDT21/CPSF5 binds to cleavage and polyadenylation RNA substrates. The homodimer mediates simultaneous sequence-specific recognition of two 5'-UGUA-3' elements within the pre-mRNA. Binds to, but does not hydrolyze mono- and di-adenosine nucleotides. May have a role in mRNA export. The chain is Pre-mRNA cleavage factor Im 25 kDa subunit 2 from Arabidopsis thaliana (Mouse-ear cress).